A 273-amino-acid chain; its full sequence is Large ribosomal subunit protein uL2 (273 aa).

The disordered stretch occupies residues 224–260 (AMNPVDHPHGGGEGKTSGGRHPVTPWGKKTKGKKTRK). The segment covering 251-260 (KKTKGKKTRK) has biased composition (basic residues).

It belongs to the universal ribosomal protein uL2 family. Part of the 50S ribosomal subunit. Forms a bridge to the 30S subunit in the 70S ribosome.

Functionally, one of the primary rRNA binding proteins. Required for association of the 30S and 50S subunits to form the 70S ribosome, for tRNA binding and peptide bond formation. It has been suggested to have peptidyltransferase activity; this is somewhat controversial. Makes several contacts with the 16S rRNA in the 70S ribosome. This is Large ribosomal subunit protein uL2 from Orientia tsutsugamushi (strain Ikeda) (Rickettsia tsutsugamushi).